We begin with the raw amino-acid sequence, 373 residues long: Thyroid hormone receptor beta-A (373 aa).

Positions 1-18 (MPSSMSGYIPSYLDKDEL) are modulating. 2 consecutive NR C4-type zinc fingers follow at residues 19-39 (CVVCGDKATGYHYRCITCEGC) and 57-81 (CKYEGKCVIDKVTRNQCQECRFKKC). A DNA-binding region (nuclear receptor) is located at residues 19-93 (CVVCGDKATG…VGMATDLVLD (75 aa)). Residues 129–373 (EEWELIQVVT…PPLFLEVFED (245 aa)) enclose the NR LBD domain.

It belongs to the nuclear hormone receptor family. NR1 subfamily.

The protein resides in the nucleus. Functionally, high affinity receptor for triiodothyronine (T3). The polypeptide is Thyroid hormone receptor beta-A (thrb-a) (Xenopus laevis (African clawed frog)).